A 145-amino-acid chain; its full sequence is Small ribosomal subunit protein uS12A (145 aa).

A Hydroxyproline modification is found at proline 64.

It belongs to the universal ribosomal protein uS12 family.

This Naumovozyma castellii (Yeast) protein is Small ribosomal subunit protein uS12A (RPS23A).